The sequence spans 234 residues: uncharacterized protein (234 aa).

This is an uncharacterized protein from Escherichia coli (strain K12).